The sequence spans 297 residues: Mycothiol acetyltransferase (297 aa).

2 consecutive N-acetyltransferase domains span residues 7–156 and 153–297; these read VFSD…VTIR and VTIR…PPPH. Glu38 contributes to the 1D-myo-inositol 2-(L-cysteinylamino)-2-deoxy-alpha-D-glucopyranoside binding site. Residue 79–81 participates in acetyl-CoA binding; sequence VVV. 1D-myo-inositol 2-(L-cysteinylamino)-2-deoxy-alpha-D-glucopyranoside-binding residues include Glu180, Lys219, and Glu227. Acetyl-CoA is bound by residues 231–233 and 238–244; these read VGV and QGLGLGR. Tyr265 provides a ligand contact to 1D-myo-inositol 2-(L-cysteinylamino)-2-deoxy-alpha-D-glucopyranoside. 270-275 contributes to the acetyl-CoA binding site; it reads NRPALR.

Belongs to the acetyltransferase family. MshD subfamily. In terms of assembly, monomer.

It carries out the reaction 1D-myo-inositol 2-(L-cysteinylamino)-2-deoxy-alpha-D-glucopyranoside + acetyl-CoA = mycothiol + CoA + H(+). Catalyzes the transfer of acetyl from acetyl-CoA to desacetylmycothiol (Cys-GlcN-Ins) to form mycothiol. The polypeptide is Mycothiol acetyltransferase (Thermomonospora curvata (strain ATCC 19995 / DSM 43183 / JCM 3096 / KCTC 9072 / NBRC 15933 / NCIMB 10081 / Henssen B9)).